The following is a 284-amino-acid chain: Ribosomal RNA small subunit methyltransferase A (284 aa).

Residues N28, L30, G55, E77, D103, and N123 each coordinate S-adenosyl-L-methionine.

This sequence belongs to the class I-like SAM-binding methyltransferase superfamily. rRNA adenine N(6)-methyltransferase family. RsmA subfamily.

It localises to the cytoplasm. It carries out the reaction adenosine(1518)/adenosine(1519) in 16S rRNA + 4 S-adenosyl-L-methionine = N(6)-dimethyladenosine(1518)/N(6)-dimethyladenosine(1519) in 16S rRNA + 4 S-adenosyl-L-homocysteine + 4 H(+). In terms of biological role, specifically dimethylates two adjacent adenosines (A1518 and A1519) in the loop of a conserved hairpin near the 3'-end of 16S rRNA in the 30S particle. May play a critical role in biogenesis of 30S subunits. The chain is Ribosomal RNA small subunit methyltransferase A from Bradyrhizobium diazoefficiens (strain JCM 10833 / BCRC 13528 / IAM 13628 / NBRC 14792 / USDA 110).